A 93-amino-acid chain; its full sequence is Em protein H5 (93 aa).

The segment at 1–93 (MASGQQERSE…IDESKFKTKS (93 aa)) is disordered. 3 stretches are compositionally biased toward basic and acidic residues: residues 7–19 (ERSELDRMAREGE), 32–62 (EAQEHLADGRSRGGETRKEQLGEEGYREMGR), and 73–93 (GGERAAREGIEIDESKFKTKS).

It belongs to the small hydrophilic plant seed protein family.

Functionally, it is thought to provide protection for the cytoplasm during the desiccation stage of embryo development. This is Em protein H5 (EMH5) from Triticum aestivum (Wheat).